The sequence spans 674 residues: Carcinine transporter (674 aa).

At 1 to 53 (MSDIEDNDGDEYDELSELRQRHKPESQPSVDEAFDLDDLLPTIGEFGKYQKLL) the chain is on the cytoplasmic side. The chain crosses the membrane as a helical span at residues 54–74 (VFGICLPACIPCGFCAFNQLF). The Extracellular portion of the chain corresponds to 75-178 (MADTPDDYWC…DLVCDQDIYP (104 aa)). 3 N-linked (GlcNAc...) asparagine glycosylation sites follow: N122, N141, and N156. A helical membrane pass occupies residues 179 to 199 (TIGLAALNTGGPVGVYLFGLL). At 200–206 (NDRGGRR) the chain is on the cytoplasmic side. A helical transmembrane segment spans residues 207-227 (LSYFVCLATLLAGSLMTSLSK). Residues 228–236 (DFWTWAGSR) lie on the Extracellular side of the membrane. Residues 237–257 (VIVGLTIPAVYQIPFIISLEL) traverse the membrane as a helical segment. At 258–264 (VGENYRS) the chain is on the cytoplasmic side. Residues 265–285 (FVTVMTCTFYTSGIMLLSGVT) traverse the membrane as a helical segment. Residues 286 to 293 (YLERDWVR) lie on the Extracellular side of the membrane. The helical transmembrane segment at 294–314 (LSYITSLPFYAYFLYMFVMPE) threads the bilayer. At 315 to 385 (SPRWLLMRGR…CRTPNMRLKT (71 aa)) the chain is on the cytoplasmic side. A helical membrane pass occupies residues 386–406 (ILITLSWFANETVYLGLSYYG). Topologically, residues 407–414 (PALGTNQY) are extracellular. The chain crosses the membrane as a helical span at residues 415–435 (VSFFLSAVVELPSYLCCWYFM). The Cytoplasmic segment spans residues 436 to 441 (DTWGRR). Residues 442 to 462 (WPLSLSMILGGVACVITVMLP) form a helical membrane-spanning segment. Topologically, residues 463 to 469 (DDAVDET) are extracellular. Residues 470–490 (LVLYLVSKALLSASFLIIYPF) traverse the membrane as a helical segment. At 491–500 (AGELYPTQVR) the chain is on the cytoplasmic side. A helical transmembrane segment spans residues 501-521 (GIGIGASSYIGGLGLIGIPFI). The Extracellular portion of the chain corresponds to 522-527 (TYLGKD). A helical transmembrane segment spans residues 528–548 (NLKLPLVIMGFLSMLGGMTGL). The Cytoplasmic portion of the chain corresponds to 549–674 (RLPETLHHRL…DGTMQLTHWI (126 aa)). Positions 614–631 (RDSRRVREPAPRIDERTP) are enriched in basic and acidic residues. Residues 614-647 (RDSRRVREPAPRIDERTPLDTTASGSGRPVHRPS) are disordered.

This sequence belongs to the major facilitator (TC 2.A.1) superfamily. Organic cation transporter (TC 2.A.1.19) family. Expressed in photoreceptor cells.

It is found in the cell membrane. The protein localises to the cell projection. It localises to the axon. In terms of biological role, carcinine transporter which is required for recycling of the neurotransmitter histamine in photoreceptor neurons of the compound eye. Following histamine release from photoreceptors and its uptake by glia where it is converted to carcinine, required for the uptake of carcinine from glia into photoreceptor cells where it can be hydrolyzed by tan to form histamine and beta-alanine. The polypeptide is Carcinine transporter (Drosophila melanogaster (Fruit fly)).